A 467-amino-acid chain; its full sequence is Argininosuccinate lyase (467 aa).

This sequence belongs to the lyase 1 family. Argininosuccinate lyase subfamily.

It is found in the cytoplasm. The catalysed reaction is 2-(N(omega)-L-arginino)succinate = fumarate + L-arginine. It functions in the pathway amino-acid biosynthesis; L-arginine biosynthesis; L-arginine from L-ornithine and carbamoyl phosphate: step 3/3. The protein is Argininosuccinate lyase of Rhizobium etli (strain ATCC 51251 / DSM 11541 / JCM 21823 / NBRC 15573 / CFN 42).